Here is a 567-residue protein sequence, read N- to C-terminus: Arginine--tRNA ligase (567 aa).

Residues A128–H138 carry the 'HIGH' region motif.

It belongs to the class-I aminoacyl-tRNA synthetase family. As to quaternary structure, monomer.

It is found in the cytoplasm. The catalysed reaction is tRNA(Arg) + L-arginine + ATP = L-arginyl-tRNA(Arg) + AMP + diphosphate. The polypeptide is Arginine--tRNA ligase (Acidovorax ebreus (strain TPSY) (Diaphorobacter sp. (strain TPSY))).